The chain runs to 623 residues: Calnexin (623 aa).

The N-terminal stretch at 1–21 (MLNRKWSFVFLTFLLVISVNA) is a signal peptide. Asp108 lines the Ca(2+) pocket. Cys151 and Cys185 are disulfide-bonded. Positions 155, 157, 176, and 183 each coordinate an alpha-D-glucoside. Asn202 carries N-linked (GlcNAc...) asparagine glycosylation. A disordered region spans residues 260-337 (SLTPPKEIFD…QKPQDWDEDM (78 aa)). Positions 266-276 (EIFDETDLKPE) are enriched in basic and acidic residues. Positions 267–400 (IFDETDLKPE…RLIDNPNYFE (134 aa)) are p domain (Extended arm). A run of 5 repeats spans residues 269–281 (DETDLKPEDWDER), 286–298 (DETASKPDDWDEN), 305–317 (DESATKPYDWNEE), 324–336 (DPEAQKPQDWDED), and 339–349 (GSWEAPLIDNP). 4 X approximate repeats regions lie at residues 269-336 (DETD…WDED) and 339-396 (GSWE…IDNP). Acidic residues-rich tracts occupy residues 277-287 (DWDEREQIEDE) and 314-323 (WNEEENELIP). Cys351 and Cys357 form a disulfide bridge. A run of 3 repeats spans residues 358–368 (GTWKPPTIKNP), 372–382 (GKWVRPKIANP), and 386–396 (GKWSPRLIDNP). Glu416 is a binding site for an alpha-D-glucoside. Asp427 lines the Ca(2+) pocket. The chain crosses the membrane as a helical span at residues 480–500 (LWAVYILCILLPLIAIGVFCF). The interval 536–623 (IAEDEEDNQP…AKRRTARRGD (88 aa)) is disordered. A compositionally biased stretch (acidic residues) spans 556–565 (IDEDEQDEVE). The segment covering 566-581 (QQPSSSKTASSESSSA) has biased composition (low complexity). A compositionally biased stretch (basic residues) spans 614 to 623 (AKRRTARRGD).

This sequence belongs to the calreticulin family. Glycosylation is important for its biological activity.

It is found in the endoplasmic reticulum membrane. The protein localises to the cytoplasm. The protein resides in the perinuclear region. Its subcellular location is the cytoplasmic vesicle. In terms of biological role, calcium-binding protein that interacts with newly synthesized monoglucosylated glycoproteins in the endoplasmic reticulum. It may act in assisting protein assembly and/or in the retention within the ER of unassembled protein subunits. It seems to play a major role in the quality control apparatus of the ER by the retention of incorrectly folded proteins. Required for embryogenesis and larval development under heat and ER stress conditions. May be important for germ cell development. Involved in neuronal necrotic cell death. This is Calnexin from Caenorhabditis briggsae.